Here is a 768-residue protein sequence, read N- to C-terminus: Pentatricopeptide repeat-containing protein At3g53360, mitochondrial (768 aa).

A mitochondrion-targeting transit peptide spans 1–70 (MATMLRLGAR…SSFKIRLRTY (70 aa)). 18 PPR repeats span residues 30–60 (TEEL…AQKN), 66–100 (RLRT…NCKY), 101–131 (DTIL…MPER), 132–166 (NLVS…DLVP), 167–201 (DQFA…ESSS), 202–232 (HLIA…IPMK), 233–267 (DLIS…GVFH), 269–303 (NEYI…ELAG), 304–334 (NAIA…IERP), 335–369 (DTAS…GFIP), 370–404 (DAIS…GFLA), 405–435 (DLTV…FRNN), 437–471 (DSVS…ECEP), 472–506 (DHIT…GLAP), 507–537 (EQFI…MDNR), 538–572 (DVVS…GIEP), 573–608 (NHVT…GISP), and 609–639 (TKEH…MKLE). A type E motif region spans residues 644-719 (VWKTLLSACK…IPGQSWIEIE (76 aa)). Positions 720 to 750 (DKIHIFFAEDIFHPERDDIYTVLHNIWSQML) are type E(+) motif.

The protein belongs to the PPR family. PCMP-E subfamily.

It is found in the mitochondrion. The protein is Pentatricopeptide repeat-containing protein At3g53360, mitochondrial (PCMP-E86) of Arabidopsis thaliana (Mouse-ear cress).